The chain runs to 195 residues: PRS fimbrial minor pilin protein (195 aa).

The signal sequence occupies residues 1 to 22; it reads MRLRFSVPLFFFGCVFVHGVFA. A disulfide bond links Cys58 and Cys97.

It belongs to the fimbrial protein family.

It localises to the secreted. The protein resides in the fimbrium. In terms of biological role, fimbriae (also called pili), polar filaments radiating from the surface of the bacterium to a length of 0.5-1.5 micrometers and numbering 100-300 per cell, enable bacteria to colonize the epithelium of specific host organs. Its function is as follows. Seems to anchor the pilus to the bacterial cell. In addition the stoichiometric relationship between PrsH and PrsA determines the pilus length. In Escherichia coli, this protein is PRS fimbrial minor pilin protein (prsH).